The following is a 237-amino-acid chain: CD209 antigen-like protein D (237 aa).

Residues 1-54 (MSDSMESKTQQVVIPEDEECLMSGTRYSDISSRLQTKFGIKSLAEYTKQSRNPL) are Cytoplasmic-facing. Residues 55–75 (VLQLLSFLFLAGLLLIILILV) traverse the membrane as a helical; Signal-anchor for type II membrane protein segment. At 76 to 237 (SKVPSSEVQN…KVSTSSCTTK (162 aa)) the chain is on the extracellular side. Cysteine 106 and cysteine 117 are joined by a disulfide. In terms of domain architecture, C-type lectin spans 112 to 227 (FFNGSCYFFS…CDKLLFWICK (116 aa)). N-linked (GlcNAc...) asparagine glycans are attached at residues asparagine 114 and asparagine 129. Cystine bridges form between cysteine 134–cysteine 226 and cysteine 205–cysteine 218. Positions 196, 198, 203, 214, and 215 each coordinate Ca(2+).

Its subcellular location is the membrane. Functionally, probable pathogen-recognition receptor. May mediate the endocytosis of pathogens which are subsequently degraded in lysosomal compartments. May recognize in a calcium-dependent manner high mannose N-linked oligosaccharides in a variety of pathogen antigens. The protein is CD209 antigen-like protein D (Cd209d) of Mus musculus (Mouse).